The primary structure comprises 493 residues: tRNA-2-methylthio-N(6)-dimethylallyladenosine synthase (493 aa).

Residues 1 to 14 (MPMTGLLQTTLSTA) show a composition bias toward polar residues. A disordered region spans residues 1–31 (MPMTGLLQTTLSTADQDRSGPAATTGDTPAR). An MTTase N-terminal domain is found at 35–155 (KRLHVITWGC…LGGMVRRAMN (121 aa)). Cysteine 44, cysteine 80, cysteine 118, cysteine 199, cysteine 203, and cysteine 206 together coordinate [4Fe-4S] cluster. Residues 185 to 417 (LAGGRTAFLT…QALLRTQQEA (233 aa)) enclose the Radical SAM core domain. Positions 420–482 (TACIGKTVNV…TNSLSATLPD (63 aa)) constitute a TRAM domain.

This sequence belongs to the methylthiotransferase family. MiaB subfamily. In terms of assembly, monomer. [4Fe-4S] cluster serves as cofactor.

It is found in the cytoplasm. It catalyses the reaction N(6)-dimethylallyladenosine(37) in tRNA + (sulfur carrier)-SH + AH2 + 2 S-adenosyl-L-methionine = 2-methylsulfanyl-N(6)-dimethylallyladenosine(37) in tRNA + (sulfur carrier)-H + 5'-deoxyadenosine + L-methionine + A + S-adenosyl-L-homocysteine + 2 H(+). In terms of biological role, catalyzes the methylthiolation of N6-(dimethylallyl)adenosine (i(6)A), leading to the formation of 2-methylthio-N6-(dimethylallyl)adenosine (ms(2)i(6)A) at position 37 in tRNAs that read codons beginning with uridine. The chain is tRNA-2-methylthio-N(6)-dimethylallyladenosine synthase from Granulibacter bethesdensis (strain ATCC BAA-1260 / CGDNIH1).